The primary structure comprises 405 residues: Dematin (405 aa).

4 disordered regions span residues 1–30, 79–158, 173–192, and 203–332; these read MERL…PSSI, PRSR…GSPQ, FPAA…TDYW, and TEWR…DRGN. A compositionally biased stretch (low complexity) spans 11–29; sequence SPGSVSPSRDSSVPGSPSS. Residues S16, S18, S26, S92, S96, S105, S110, S113, and S156 each carry the phosphoserine modification. Residues 108–123 are compositionally biased toward polar residues; it reads IISQASAPRTTGTPRT. The segment covering 216–227 has biased composition (acidic residues); sequence EEEEEEEDDDSG. An interaction with RASGRF2 region spans residues 224–308; the sequence is DDSGEEMKAL…SRLQSTEFSP (85 aa). Position 226 is a phosphoserine (S226). 2 stretches are compositionally biased toward basic and acidic residues: residues 228 to 242 and 252 to 261; these read EEMK…EELS and ILKEEMEKSL. Residues S269, S279, S289, S303, S315, S333, S372, and S383 each carry the phosphoserine modification. The segment covering 276-322 has biased composition (polar residues); sequence FHTSLHQGTSKSSSLPAYGRTTLSRLQSTEFSPSGSETGSPGLQNGE. Residues 337-405 enclose the HP domain; the sequence is VLEQKIYPYE…NELKKKASLF (69 aa). S403 carries the phosphoserine; by PKA modification.

Belongs to the villin/gelsolin family. As to quaternary structure, monomeric (isoform 2); under reducing conditions. Self-associates. Exists under oxidizing condition as a trimer of two isoforms 2 and isoform 1 linked by disulfide bonds. Found in a complex with DMTN, F-actin and spectrin. Found in a complex with ADD2, DMTN and SLC2A1. Interacts with F-actin, ITPKB, RASGRF2 and spectrin. Isoform 2 interacts with SLC2A1 (via C-terminus cytoplasmic region). Isoform 1 and isoform 2 interact (phosphorylated form) with plasmodium berghei 14-3-3 protein; the interaction occurs in a PKA-dependent manner. Phosphorylated. Phosphorylation at Ser-403 by PKA causes the C-terminal headpiece domain to associate with the N-terminal core domain, and leads to the inhibition of its actin bundling activity. Post-translationally, the N-terminus is blocked. Expressed in platelets (at protein level). Expressed in heart, brain, lung, skeletal muscle, and kidney.

The protein resides in the cytoplasm. The protein localises to the cytosol. It localises to the perinuclear region. It is found in the cytoskeleton. Its subcellular location is the cell membrane. The protein resides in the membrane. The protein localises to the endomembrane system. It localises to the cell projection. Functionally, membrane-cytoskeleton-associated protein with F-actin-binding activity that induces F-actin bundles formation and stabilization. Its F-actin-bundling activity is reversibly regulated upon its phosphorylation by the cAMP-dependent protein kinase A (PKA). Binds to the erythrocyte membrane glucose transporter-1 SLC2A1/GLUT1, and hence stabilizes and attaches the spectrin-actin network to the erythrocytic plasma membrane. Plays a role in maintaining the functional integrity of PKA-activated erythrocyte shape and the membrane mechanical properties. Also plays a role as a modulator of actin dynamics in fibroblasts; acts as a negative regulator of the RhoA activation pathway. In platelets, functions as a regulator of internal calcium mobilization across the dense tubular system that affects platelet granule secretion pathways and aggregation. Also required for the formation of a diverse set of cell protrusions, such as filopodia and lamellipodia, necessary for platelet cell spreading, motility and migration. Acts as a tumor suppressor and inhibits malignant cell transformation. The polypeptide is Dematin (DMTN) (Homo sapiens (Human)).